A 423-amino-acid chain; its full sequence is G2/mitotic-specific cyclin-B1 (423 aa).

A Phosphoserine; by CDK1 modification is found at serine 116. A Phosphoserine modification is found at serine 118. Serine 123 is subject to Phosphoserine; by PLK1. Serine 137 is subject to Phosphoserine. Interaction with CDK2 stretches follow at residues 159–167 (EYVKDIYAY) and 248–251 (YEEM). Phosphothreonine is present on threonine 311.

It belongs to the cyclin family. Cyclin AB subfamily. In terms of assembly, interacts with the CDC2 protein kinase to form a serine/threonine kinase holoenzyme complex also known as maturation promoting factor (MPF). The cyclin subunit imparts substrate specificity to the complex. Binds HEI10. Interacts with catalytically active RALBP1 and CDC2 during mitosis to form an endocytotic complex during interphase. Interacts with CCNF; interaction is required for nuclear localization. Interacts with CDK5RAP3. Interacts with RFPL4A and UBE2A. Interacts with INCA1. Post-translationally, ubiquitinated by the SCF(NIPA) complex during interphase, leading to its destruction. Deubiquitinated by USP22 during G2/M phase. In terms of processing, phosphorylated by PLK1 at Ser-123 on centrosomes during prophase: phosphorylation by PLK1 does not cause nuclear import. Phosphorylation at Ser-137 was also reported to be mediated by PLK1 but Ser-123 seems to be the primary phosphorylation site.

The protein resides in the cytoplasm. Its subcellular location is the nucleus. It is found in the cytoskeleton. It localises to the microtubule organizing center. The protein localises to the centrosome. Its function is as follows. Essential for the control of the cell cycle at the G2/M (mitosis) transition. This Rattus norvegicus (Rat) protein is G2/mitotic-specific cyclin-B1 (Ccnb1).